A 191-amino-acid chain; its full sequence is Xanthine phosphoribosyltransferase (191 aa).

The xanthine site is built by L20 and N27. 128–132 (ANGQA) lines the 5-phospho-alpha-D-ribose 1-diphosphate pocket. K156 is a xanthine binding site.

Belongs to the purine/pyrimidine phosphoribosyltransferase family. Xpt subfamily. In terms of assembly, homodimer.

The protein localises to the cytoplasm. The catalysed reaction is XMP + diphosphate = xanthine + 5-phospho-alpha-D-ribose 1-diphosphate. The protein operates within purine metabolism; XMP biosynthesis via salvage pathway; XMP from xanthine: step 1/1. Converts the preformed base xanthine, a product of nucleic acid breakdown, to xanthosine 5'-monophosphate (XMP), so it can be reused for RNA or DNA synthesis. The sequence is that of Xanthine phosphoribosyltransferase from Acinetobacter baumannii (strain AB307-0294).